Reading from the N-terminus, the 337-residue chain is Ribosomal RNA small subunit methyltransferase H (337 aa).

S-adenosyl-L-methionine contacts are provided by residues glycine 36–histidine 38, aspartate 56, phenylalanine 82, aspartate 100, and glutamine 107. The tract at residues leucine 315 to glutamine 337 is disordered.

It belongs to the methyltransferase superfamily. RsmH family.

The protein localises to the cytoplasm. It catalyses the reaction cytidine(1402) in 16S rRNA + S-adenosyl-L-methionine = N(4)-methylcytidine(1402) in 16S rRNA + S-adenosyl-L-homocysteine + H(+). Specifically methylates the N4 position of cytidine in position 1402 (C1402) of 16S rRNA. This Xanthomonas euvesicatoria pv. vesicatoria (strain 85-10) (Xanthomonas campestris pv. vesicatoria) protein is Ribosomal RNA small subunit methyltransferase H.